A 99-amino-acid polypeptide reads, in one-letter code: Large ribosomal subunit protein eL21 (99 aa).

A compositionally biased stretch (basic residues) spans 1–18 (MVKHSRGNRTRSRKLLKK). Residues 1–26 (MVKHSRGNRTRSRKLLKKSPRERGAV) are disordered.

It belongs to the eukaryotic ribosomal protein eL21 family.

In Metallosphaera sedula (strain ATCC 51363 / DSM 5348 / JCM 9185 / NBRC 15509 / TH2), this protein is Large ribosomal subunit protein eL21.